The following is a 426-amino-acid chain: Glutamate-1-semialdehyde 2,1-aminomutase (426 aa).

Lys-263 is modified (N6-(pyridoxal phosphate)lysine).

It belongs to the class-III pyridoxal-phosphate-dependent aminotransferase family. HemL subfamily. In terms of assembly, homodimer. Pyridoxal 5'-phosphate is required as a cofactor.

The protein resides in the cytoplasm. It catalyses the reaction (S)-4-amino-5-oxopentanoate = 5-aminolevulinate. It participates in porphyrin-containing compound metabolism; protoporphyrin-IX biosynthesis; 5-aminolevulinate from L-glutamyl-tRNA(Glu): step 2/2. The chain is Glutamate-1-semialdehyde 2,1-aminomutase from Dichelobacter nodosus (strain VCS1703A).